The primary structure comprises 280 residues: Shikimate dehydrogenase (NADP(+)) (280 aa).

Shikimate contacts are provided by residues 19-21 (SFS) and Thr66. Catalysis depends on Lys70, which acts as the Proton acceptor. Glu82 is a binding site for NADP(+). Shikimate-binding residues include Asn91 and Asp106. Residues 130-134 (GSGGA) and Leu222 contribute to the NADP(+) site. Residue Tyr224 coordinates shikimate. Residue Gly245 participates in NADP(+) binding.

This sequence belongs to the shikimate dehydrogenase family. In terms of assembly, homodimer.

It carries out the reaction shikimate + NADP(+) = 3-dehydroshikimate + NADPH + H(+). It participates in metabolic intermediate biosynthesis; chorismate biosynthesis; chorismate from D-erythrose 4-phosphate and phosphoenolpyruvate: step 4/7. Functionally, involved in the biosynthesis of the chorismate, which leads to the biosynthesis of aromatic amino acids. Catalyzes the reversible NADPH linked reduction of 3-dehydroshikimate (DHSA) to yield shikimate (SA). The polypeptide is Shikimate dehydrogenase (NADP(+)) (Methanococcus maripaludis (strain C7 / ATCC BAA-1331)).